The chain runs to 150 residues: Large ribosomal subunit protein bL9 (150 aa).

It belongs to the bacterial ribosomal protein bL9 family.

Functionally, binds to the 23S rRNA. The sequence is that of Large ribosomal subunit protein bL9 from Pseudoalteromonas atlantica (strain T6c / ATCC BAA-1087).